The sequence spans 1077 residues: Insulin receptor substrate 2-B (1077 aa).

Residues 1 to 66 (MAGVLCPTEE…APASTAEDDV (66 aa)) are disordered. 2 consecutive short sequence motifs (YXXM motif) follow at residues 33–36 (YRRM) and 147–150 (YFAM). Positions 65–170 (DVRKRGYLRK…WYQALSELIN (106 aa)) constitute a PH domain. Positions 195-299 (FKEVWQVNVK…DTMKALKAYS (105 aa)) constitute an IRS-type PTB domain. Disordered stretches follow at residues 342 to 373 (ETVV…RPFR), 428 to 464 (VCSS…SDEY), and 476 to 495 (VRSN…EENT). Polar residues-rich tracts occupy residues 350–364 (SAKN…SSEG) and 428–444 (VCSS…LTRP). Residues 445–457 (SSSSVCGSPSDGG) are compositionally biased toward low complexity. Residues 477 to 495 (RSNTPDSLGNTPPIQEENT) show a composition bias toward polar residues. The short motif at 499-502 (YMSM) is the YXXM motif 3 element. Over residues 530 to 544 (KPTNAASQQKSQTAV) the composition is skewed to polar residues. A disordered region spans residues 530-571 (KPTNAASQQKSQTAVSLDEDSEETNKQFAYAESPKLKDSSHV). Short sequence motifs (YXXM motif) lie at residues 595–598 (YMPM), 608–611 (YLPM), 634–637 (YMMM), 666–669 (YMDM), 713–716 (YVPM), and 891–894 (YTTM).

In terms of processing, phosphorylated by INSR.

Potentiates insulin signaling. The protein is Insulin receptor substrate 2-B (irs2-b) of Xenopus laevis (African clawed frog).